The following is a 427-amino-acid chain: Adenylosuccinate synthetase (427 aa).

Residues Gly-12–Lys-18 and Gly-40–Thr-42 contribute to the GTP site. Asp-13 serves as the catalytic Proton acceptor. Residues Asp-13 and Gly-40 each coordinate Mg(2+). IMP is bound by residues Asp-13–Lys-16, Asn-38–His-41, Thr-128, Arg-142, Gln-223, Thr-238, and Arg-302. The active-site Proton donor is the His-41. A substrate-binding site is contributed by Val-298–Arg-304. Residues Arg-304, Lys-330–Asp-332, and Gly-412–Gly-414 each bind GTP.

This sequence belongs to the adenylosuccinate synthetase family. As to quaternary structure, homodimer. It depends on Mg(2+) as a cofactor.

The protein localises to the cytoplasm. It carries out the reaction IMP + L-aspartate + GTP = N(6)-(1,2-dicarboxyethyl)-AMP + GDP + phosphate + 2 H(+). The protein operates within purine metabolism; AMP biosynthesis via de novo pathway; AMP from IMP: step 1/2. Plays an important role in the de novo pathway of purine nucleotide biosynthesis. Catalyzes the first committed step in the biosynthesis of AMP from IMP. This chain is Adenylosuccinate synthetase, found in Parafrankia sp. (strain EAN1pec).